Reading from the N-terminus, the 428-residue chain is Putative F-box protein At3g22421 (428 aa).

Positions 4–50 (TTTISHLPTELLDEIISRVPLKSTRAVRLTCKNWDSLFKNRSFMKEE) constitute an F-box domain.

This chain is Putative F-box protein At3g22421, found in Arabidopsis thaliana (Mouse-ear cress).